The following is a 1169-amino-acid chain: Zinc finger protein 862 (1169 aa).

A KRAB 1 domain is found at 11-77 (VTFDDITVYL…SVQGQRSLLE (67 aa)). The segment at 135–218 (KPRSIQKSWF…RDPIWAARFR (84 aa)) adopts a TTF-type 1 zinc-finger fold. A KRAB 2 domain is found at 333–404 (VVFEDVAVYF…DPNGPKWGKG (72 aa)). The segment at 461 to 544 (RPRSIQRSWF…KEDTPHTALV (84 aa)) adopts a TTF-type 2 zinc-finger fold.

The protein resides in the nucleus. Its function is as follows. May be involved in transcriptional regulation. In Homo sapiens (Human), this protein is Zinc finger protein 862 (ZNF862).